A 151-amino-acid chain; its full sequence is Deoxyuridine 5'-triphosphate nucleotidohydrolase (151 aa).

Substrate contacts are provided by residues 70 to 72, Asn-83, 87 to 89, and Met-97; these read RSG and LID.

Belongs to the dUTPase family. The cofactor is Mg(2+).

It carries out the reaction dUTP + H2O = dUMP + diphosphate + H(+). Its pathway is pyrimidine metabolism; dUMP biosynthesis; dUMP from dCTP (dUTP route): step 2/2. Functionally, this enzyme is involved in nucleotide metabolism: it produces dUMP, the immediate precursor of thymidine nucleotides and it decreases the intracellular concentration of dUTP so that uracil cannot be incorporated into DNA. This chain is Deoxyuridine 5'-triphosphate nucleotidohydrolase, found in Mannheimia succiniciproducens (strain KCTC 0769BP / MBEL55E).